Consider the following 536-residue polypeptide: Chaperonin GroEL 2 (536 aa).

ATP contacts are provided by residues T29–P32, D86–T90, G412, and D495.

It belongs to the chaperonin (HSP60) family. In terms of assembly, forms a cylinder of 14 subunits composed of two heptameric rings stacked back-to-back. Interacts with the co-chaperonin GroES.

The protein resides in the cytoplasm. It catalyses the reaction ATP + H2O + a folded polypeptide = ADP + phosphate + an unfolded polypeptide.. Functionally, together with its co-chaperonin GroES, plays an essential role in assisting protein folding. The GroEL-GroES system forms a nano-cage that allows encapsulation of the non-native substrate proteins and provides a physical environment optimized to promote and accelerate protein folding. The chain is Chaperonin GroEL 2 from Arthrobacter sp. (strain FB24).